The following is a 499-amino-acid chain: MRLGYNEKLVLLKLAELKNATVEELIEKTNLDQVAVMRALLTLQSQGLAKVHEERRRMIKLTETGKRYIEIGLPEIRALKILKEKGKVTLNDLKDVLSDEELKAIVGVLRKEGWAEVSKTKEGLTLKLSEKGKKAEKRAIDIALEVLSKGEVSVEEIEKIISVKELKRRKIAEEEEKVIRNVEITDKGLELVEKGIELKREVSILTPELIVTGKWREVEFKPFNIKAPVKKIYPGKKQPYRVFLDKIRRRLIEMGFIEMTVDSLIETQFWNFDALFQPQNHPAREWTDTYQLKYPEKGYLPDENLVSKVKEAHERGLAGSRGWGYVWSPERAMLLMPRAHATALSARELAKGIEIPGKYFTIQRVFRPDVLDRTHLIEFNQIDGFVASEDLTFRHLLGILKRFAIEIAGAKKVKFFPDYYPFTEPSVQLSAYHPELGWVEFGGAGIFREEMTEALGIKVPVIAWGIGIDRLAMFKLGVDDIRYLFSYDLKWLRESKLIW.

Residues Thr-342, 381–383 (QID), and Phe-422 each bind L-phenylalanine. Glu-424 is a binding site for Mg(2+). Phe-447 serves as a coordination point for L-phenylalanine.

It belongs to the class-II aminoacyl-tRNA synthetase family. Phe-tRNA synthetase alpha subunit type 2 subfamily. As to quaternary structure, tetramer of two alpha and two beta subunits. It depends on Mg(2+) as a cofactor.

The protein localises to the cytoplasm. The catalysed reaction is tRNA(Phe) + L-phenylalanine + ATP = L-phenylalanyl-tRNA(Phe) + AMP + diphosphate + H(+). The protein is Phenylalanine--tRNA ligase alpha subunit of Pyrococcus horikoshii (strain ATCC 700860 / DSM 12428 / JCM 9974 / NBRC 100139 / OT-3).